A 118-amino-acid chain; its full sequence is MKLSENEASKLIEKLWFRHTDSTIIAVLQDYKTKEVLMVGHMNREAVFKTLTTGYVHFWSLSRKKLWLKGETSGHFQLVEDFKIDCDGDAMVFLVKSVGPVCHTGNRSCFYRNFSDLI.

Aspartate 85 contributes to the Mg(2+) binding site. A Zn(2+)-binding site is contributed by cysteine 86. Mg(2+)-binding residues include aspartate 87 and aspartate 89. Zn(2+) is bound by residues cysteine 102 and cysteine 109.

The protein belongs to the PRA-CH family. Homodimer. Mg(2+) is required as a cofactor. Requires Zn(2+) as cofactor.

Its subcellular location is the cytoplasm. The catalysed reaction is 1-(5-phospho-beta-D-ribosyl)-5'-AMP + H2O = 1-(5-phospho-beta-D-ribosyl)-5-[(5-phospho-beta-D-ribosylamino)methylideneamino]imidazole-4-carboxamide. The protein operates within amino-acid biosynthesis; L-histidine biosynthesis; L-histidine from 5-phospho-alpha-D-ribose 1-diphosphate: step 3/9. Its function is as follows. Catalyzes the hydrolysis of the adenine ring of phosphoribosyl-AMP. In Sulfurisphaera tokodaii (strain DSM 16993 / JCM 10545 / NBRC 100140 / 7) (Sulfolobus tokodaii), this protein is Phosphoribosyl-AMP cyclohydrolase.